The following is a 616-amino-acid chain: Dihydroxy-acid dehydratase (616 aa).

A Mg(2+)-binding site is contributed by aspartate 81. Cysteine 122 is a binding site for [2Fe-2S] cluster. Residues aspartate 123 and lysine 124 each coordinate Mg(2+). Lysine 124 carries the post-translational modification N6-carboxylysine. Cysteine 196 is a binding site for [2Fe-2S] cluster. Position 496 (glutamate 496) interacts with Mg(2+). Residue serine 522 is the Proton acceptor of the active site.

It belongs to the IlvD/Edd family. Homodimer. It depends on [2Fe-2S] cluster as a cofactor. Mg(2+) is required as a cofactor.

It carries out the reaction (2R)-2,3-dihydroxy-3-methylbutanoate = 3-methyl-2-oxobutanoate + H2O. It catalyses the reaction (2R,3R)-2,3-dihydroxy-3-methylpentanoate = (S)-3-methyl-2-oxopentanoate + H2O. Its pathway is amino-acid biosynthesis; L-isoleucine biosynthesis; L-isoleucine from 2-oxobutanoate: step 3/4. The protein operates within amino-acid biosynthesis; L-valine biosynthesis; L-valine from pyruvate: step 3/4. In terms of biological role, functions in the biosynthesis of branched-chain amino acids. Catalyzes the dehydration of (2R,3R)-2,3-dihydroxy-3-methylpentanoate (2,3-dihydroxy-3-methylvalerate) into 2-oxo-3-methylpentanoate (2-oxo-3-methylvalerate) and of (2R)-2,3-dihydroxy-3-methylbutanoate (2,3-dihydroxyisovalerate) into 2-oxo-3-methylbutanoate (2-oxoisovalerate), the penultimate precursor to L-isoleucine and L-valine, respectively. The sequence is that of Dihydroxy-acid dehydratase from Streptomyces griseus subsp. griseus (strain JCM 4626 / CBS 651.72 / NBRC 13350 / KCC S-0626 / ISP 5235).